Reading from the N-terminus, the 240-residue chain is Small ribosomal subunit protein uS3 (240 aa).

One can recognise a KH type-2 domain in the interval 39–107 (IRDFIKKEAK…ELHLNIVEVR (69 aa)). Basic and acidic residues-rich tracts occupy residues 212-221 (PQARDRRATE) and 231-240 (PRRDRDRDAR). The interval 212–240 (PQARDRRATEAQDGPSPRGPRRDRDRDAR) is disordered.

Belongs to the universal ribosomal protein uS3 family. As to quaternary structure, part of the 30S ribosomal subunit. Forms a tight complex with proteins S10 and S14.

Its function is as follows. Binds the lower part of the 30S subunit head. Binds mRNA in the 70S ribosome, positioning it for translation. This chain is Small ribosomal subunit protein uS3, found in Paracoccus denitrificans (strain Pd 1222).